A 479-amino-acid polypeptide reads, in one-letter code: Polyadenylate-binding protein-interacting protein 1 (479 aa).

Positions 1–114 are disordered; it reads MSDGFDRAPG…PQQNSESAMA (114 aa). At serine 2 the chain carries N-acetylalanine. The segment covering 11 to 33 has biased composition (gly residues); it reads AGRGRSRGLGRGGGGPEGGGFPN. Arginine 21 is modified (omega-N-methylarginine). Positions 45 to 69 are enriched in pro residues; the sequence is PPQPKAPGFLQPPPLRQPRTTPPPG. Over residues 98-111 the composition is skewed to polar residues; the sequence is PSSQDKIPQQNSES. Residues 116 to 143 form a PABPC1-interacting motif-2 (PAM2) region; the sequence is PQVVVAPVLMSKLSVNAPEFYPSGYSSS. The tract at residues 157-375 is PAIP1 middle domain (PAIP1M); sequence TLSEYVQDFL…LLKLVELRSS (219 aa). Positions 159–376 constitute an MIF4G domain; the sequence is SEYVQDFLNH…LKLVELRSSN (218 aa). Residues 435 to 455 form a disordered region; it reads DYEENGTDLSGAGDPYLDDID. The interval 440-479 is PABPC1-interacting motif-1 (PAM1); it reads GTDLSGAGDPYLDDIDDEMDPEIEEAYEKFCLESERKRKQ.

Interacts with the RRM1-RRM2 and C-terminus regions of PABPC1 in a 1:1 stoichiometry. Interacts with EIF4A. As to quaternary structure, (Microbial infection) Interacts (via PAIP1M) with human SARS coronaviruses SARS-COV and SARS-COV-2 NSP3 protein (via SARS-unique domain); the interaction increases binding affinity with PABPC1.

It is found in the cytoplasm. Functionally, acts as a coactivator in the regulation of translation initiation of poly(A)-containing mRNAs. Its stimulatory activity on translation is mediated via its action on PABPC1. Competes with PAIP2 for binding to PABPC1. Its association with EIF4A and PABPC1 may potentiate contacts between mRNA termini. May also be involved in translationally coupled mRNA turnover. Implicated with other RNA-binding proteins in the cytoplasmic deadenylation/translational and decay interplay of the FOS mRNA mediated by the major coding-region determinant of instability (mCRD) domain. (Microbial infection) Upon interaction with SARS coronavirus SARS-CoV NSP3 protein, plays an important role in viral protein synthesis. The sequence is that of Polyadenylate-binding protein-interacting protein 1 from Homo sapiens (Human).